The primary structure comprises 436 residues: 3-ketoacyl-CoA thiolase (436 aa).

The active-site Acyl-thioester intermediate is cysteine 99. Catalysis depends on proton acceptor residues histidine 392 and cysteine 422.

The protein belongs to the thiolase-like superfamily. Thiolase family. As to quaternary structure, heterotetramer of two alpha chains (FadJ) and two beta chains (FadI).

It localises to the cytoplasm. The enzyme catalyses an acyl-CoA + acetyl-CoA = a 3-oxoacyl-CoA + CoA. Its pathway is lipid metabolism; fatty acid beta-oxidation. Functionally, catalyzes the final step of fatty acid oxidation in which acetyl-CoA is released and the CoA ester of a fatty acid two carbons shorter is formed. The protein is 3-ketoacyl-CoA thiolase of Shewanella frigidimarina (strain NCIMB 400).